Consider the following 400-residue polypeptide: Enoyl-[acyl-carrier-protein] reductase [NADH] (400 aa).

Residues 48 to 53, 74 to 75, 111 to 112, and 139 to 140 contribute to the NAD(+) site; these read GSSSGY, FE, DA, and LA. A substrate-binding site is contributed by tyrosine 225. Catalysis depends on tyrosine 235, which acts as the Proton donor. NAD(+) is bound by residues lysine 244 and 273-275; that span reads VVT.

This sequence belongs to the TER reductase family. As to quaternary structure, monomer.

It catalyses the reaction a 2,3-saturated acyl-[ACP] + NAD(+) = a (2E)-enoyl-[ACP] + NADH + H(+). It functions in the pathway lipid metabolism; fatty acid biosynthesis. In terms of biological role, involved in the final reduction of the elongation cycle of fatty acid synthesis (FAS II). Catalyzes the reduction of a carbon-carbon double bond in an enoyl moiety that is covalently linked to an acyl carrier protein (ACP). The polypeptide is Enoyl-[acyl-carrier-protein] reductase [NADH] (Shewanella baltica (strain OS185)).